The primary structure comprises 571 residues: DM7 family protein CG15332 (571 aa).

Residues 440–472 (TRDDGINTADYQSQFPELEPEPEPEPEDEGEDV) are disordered. The segment covering 457-471 (LEPEPEPEPEDEGED) has biased composition (acidic residues).

It belongs to the DM7 family.

This Drosophila melanogaster (Fruit fly) protein is DM7 family protein CG15332.